The sequence spans 358 residues: MTEADNGVLHTLFHSDQGGHEQVVLCQDRASGLKAVIAIHSTALGPALGGTRFYPYATEEEAVADVLNLSRGMSYKNAMAGLDHGGGKAVIIGDPEQIKSEDLLLAFGRFVASLGGRYVTACDVGTYVADMDVVARECRWTTGRSPENGGAGDSSVLTAFGVFQGMRASAEHLWGDPSLRGRKVGVAGVGKVGHHLVEHLLEDGADVVITDVREESVNRSTHKHPSVTAVADTEALIRTEGLDIYAPCALGGALDDDSVPVLTAKVVCGAANNQLAHPGVEKDLADRSILYAPDYVVNAGGVIQVADELRGFDFDRCKAKASKIFDTTLAIFARAKEDGIPPAAAADRIAEQRMSDAR.

Residue Lys-88 is part of the active site. 188–194 (GVGKVGH) provides a ligand contact to NAD(+).

This sequence belongs to the Glu/Leu/Phe/Val dehydrogenases family. In terms of assembly, homodimer.

Its subcellular location is the cytoplasm. It carries out the reaction L-valine + NAD(+) + H2O = 3-methyl-2-oxobutanoate + NH4(+) + NADH + H(+). Its pathway is amino-acid degradation; L-valine degradation. Functionally, oxidative deamination of branched-chain amino acids. The catabolism of valine is the major source of fatty acid precursors for macrolide biosynthesis and a vital source of antibiotic precursors. The chain is Valine dehydrogenase (vdh) from Streptomyces virginiae (Streptomyces cinnamonensis).